The chain runs to 600 residues: MCGIVGFIGEQDAKEILLKGLEKLEYRGYDSAGIAVQAENGVVVYKEKGRIAKLREIVDENVAASVGIGHTRWATHGVPSKVNAHPHQSTSKRFTLVHNGVIENYELVKKEYLQDVTFVSETDTEVIVQLMEQQVSTGLSVEEAFRNTLSLLHGSYAIGLLDAENPNMIYVAKNKSPLLVGVGDNFNVVASDAMAMLQVTDQFIELMDKEIVIVTKESITIKNLQGETIERAPFTAELDASDIEKGTYPHFMLKEIDEQPLVIRNIIQKYQDENGEIELNQDIRNAILDSDRIYIIACGTSYHAGLVGKQFIEKFAKMPVEVHVASEFSYNMPLLTERPFFIYISQSGETADSRAVLVQTNEMGHKALTITNVPGSTLSREADYTLPLYAGPEIAVASTKAYTAQLAVLSILAADIAKAKGEVLDFDLTHELGLVANAMIELCDQKEEMDALAKQFLATTRNCFFIGRSVDFYVGLEGALKLKEISYIQAEGFAGGELKHGTIALIENGTPVIALATQEHVNLGIRGNVKEVVARGANPCIISMKGLEMEGDSFVLPTVHEALAPLVAVIPLQLISYYAALHRECDVDKPRNLAKSVTVE.

C2 serves as the catalytic Nucleophile; for GATase activity. Residues 2-217 (CGIVGFIGEQ…DKEIVIVTKE (216 aa)) enclose the Glutamine amidotransferase type-2 domain. SIS domains are found at residues 283–422 (IRNA…AKGE) and 452–590 (LAKQ…VDKP). The active-site For Fru-6P isomerization activity is the K595.

In terms of assembly, homodimer.

The protein localises to the cytoplasm. It carries out the reaction D-fructose 6-phosphate + L-glutamine = D-glucosamine 6-phosphate + L-glutamate. Its function is as follows. Catalyzes the first step in hexosamine metabolism, converting fructose-6P into glucosamine-6P using glutamine as a nitrogen source. This Bacillus cereus (strain ATCC 14579 / DSM 31 / CCUG 7414 / JCM 2152 / NBRC 15305 / NCIMB 9373 / NCTC 2599 / NRRL B-3711) protein is Glutamine--fructose-6-phosphate aminotransferase [isomerizing].